Reading from the N-terminus, the 309-residue chain is Dicarboxylate carrier UCP2 (309 aa).

The Mitochondrial intermembrane portion of the chain corresponds to 1 to 16 (MVGFKATDVPPTATVK). Solcar repeat units follow at residues 11–106 (PTAT…VKQF), 114–203 (AGIG…IKDT), and 212–297 (DDLP…LKRA). The important for interaction with long-chain fatty acids stretch occupies residues 16-63 (KFLGAGTAACIADLITFPLDTAKVRLQIQGERQGPMQAAASAQYRGVL). A helical membrane pass occupies residues 17 to 40 (FLGAGTAACIADLITFPLDTAKVR). The Mitochondrial matrix segment spans residues 41 to 77 (LQIQGERQGPMQAAASAQYRGVLGTILTMVRTEGPRS). A helical membrane pass occupies residues 78–103 (LYSGLVAGLQRQMSFASVRIGLYDSV). Residues 104–119 (KQFYTKGSEHAGIGSR) are Mitochondrial intermembrane-facing. The helical transmembrane segment at 120 to 145 (LLAGSTTGALAVAVAQPTDVVKVRFQ) threads the bilayer. The Mitochondrial matrix portion of the chain corresponds to 146-173 (AQARAGAGRRYQSTVEAYKTIAREEGFR). Residues 174 to 199 (GLWKGTSPNVARNAIVNCAELVTYDL) form a helical membrane-spanning segment. Over 200-217 (IKDTLLKAHLMTDDLPCH) the chain is Mitochondrial intermembrane. Residues 218–242 (FTSAFGAGFCTTVIASPVDVVKTRY) form a helical membrane-spanning segment. The Mitochondrial matrix portion of the chain corresponds to 243–268 (MNSALGQYSSAGHCALTMLQKEGPQA). Residues 269 to 294 (FYKGFMPSFLRLGSWNVVMFVTYEQL) form a helical membrane-spanning segment. The interval 278 to 285 (LRLGSWNV) is important for interaction with long-chain fatty acids. The Mitochondrial intermembrane segment spans residues 295 to 309 (KRALMAARASREAPF).

This sequence belongs to the mitochondrial carrier (TC 2.A.29) family. Homotetramer. Adopts an asymmetrical dimer of dimers functional form. Interacts with MICU1 (when methylated); leading to decrease the calcium sensitivity of MICU1.

It localises to the mitochondrion inner membrane. The catalysed reaction is L-aspartate(out) + phosphate(in) + H(+)(in) = L-aspartate(in) + phosphate(out) + H(+)(out). The enzyme catalyses oxaloacetate(out) + phosphate(in) + H(+)(in) = oxaloacetate(in) + phosphate(out) + H(+)(out). It catalyses the reaction (S)-malate(out) + phosphate(in) + H(+)(in) = (S)-malate(in) + phosphate(out) + H(+)(out). It carries out the reaction malonate(out) + phosphate(in) + H(+)(in) = malonate(in) + phosphate(out) + H(+)(out). The catalysed reaction is sulfate(out) + phosphate(in) + H(+)(in) = sulfate(in) + phosphate(out) + H(+)(out). The enzyme catalyses (S)-malate(out) = (S)-malate(in). It catalyses the reaction L-aspartate(out) = L-aspartate(in). It carries out the reaction phosphate(in) = phosphate(out). The catalysed reaction is chloride(in) = chloride(out). The enzyme catalyses H(+)(in) = H(+)(out). It catalyses the reaction a long-chain fatty acid(out) = a long-chain fatty acid(in). Its function is as follows. Antiporter that exports dicarboxylate intermediates of the Krebs cycle in exchange for phosphate plus a proton across the inner membrane of mitochondria, a process driven by mitochondrial motive force with an overall impact on glycolysis, glutaminolysis and glutathione-dependent redox balance. Continuous export of oxaloacetate and related four-carbon dicarboxylates from mitochondrial matrix into the cytosol negatively regulates the oxidation of acetyl-CoA substrates via the Krebs cycle lowering the ATP/ADP ratio and reactive oxygen species (ROS) production. May mediate inducible proton entry into the mitochondrial matrix affecting ATP turnover as a protection mechanism against oxidative stress. The proton currents are most likely associated with fatty acid flipping across the inner membrane of mitochondria in a metabolic process regulated by free fatty acids and purine nucleotides. Regulates the use of glucose as a source of energy. Required for glucose-induced DRP1-dependent mitochondrial fission and neuron activation in the ventromedial nucleus of the hypothalamus (VMH). This mitochondrial adaptation mechanism modulates the VMH pool of glucose-excited neurons with an impact on systemic glucose homeostasis. Regulates ROS levels and metabolic reprogramming of macrophages during the resolution phase of inflammation. Attenuates ROS production in response to IL33 to preserve the integrity of the Krebs cycle required for persistent production of itaconate and subsequent GATA3-dependent differentiation of inflammation-resolving alternatively activated macrophages. Can unidirectionally transport anions including L-malate, L-aspartate, phosphate and chloride ions. Does not mediate adaptive thermogenesis. The protein is Dicarboxylate carrier UCP2 (UCP2) of Bos taurus (Bovine).